A 454-amino-acid chain; its full sequence is Bifunctional protein GlmU (454 aa).

The segment at 1 to 226 is pyrophosphorylase; it reads MTTTVIILAA…AFEVEGVNDR (226 aa). Residues 8 to 11, Lys-22, Gln-73, 78 to 79, 100 to 102, Gly-137, Glu-151, Asn-166, and Asn-224 contribute to the UDP-N-acetyl-alpha-D-glucosamine site; these read LAAG, GT, and YGD. Asp-102 lines the Mg(2+) pocket. Residue Asn-224 participates in Mg(2+) binding. Residues 227-247 are linker; that stretch reads LQLAALEREFQLQQAKSLMQQ. The interval 248–454 is N-acetyltransferase; sequence GVTLTDPSRF…NYQRPQKLKK (207 aa). The UDP-N-acetyl-alpha-D-glucosamine site is built by Arg-330 and Lys-348. His-360 serves as the catalytic Proton acceptor. Residues Tyr-363 and Asn-374 each contribute to the UDP-N-acetyl-alpha-D-glucosamine site. Acetyl-CoA-binding positions include Ala-377, 383-384, Ser-402, Ala-420, and Arg-437; that span reads NY.

In the N-terminal section; belongs to the N-acetylglucosamine-1-phosphate uridyltransferase family. This sequence in the C-terminal section; belongs to the transferase hexapeptide repeat family. In terms of assembly, homotrimer. Mg(2+) is required as a cofactor.

It is found in the cytoplasm. It carries out the reaction alpha-D-glucosamine 1-phosphate + acetyl-CoA = N-acetyl-alpha-D-glucosamine 1-phosphate + CoA + H(+). It catalyses the reaction N-acetyl-alpha-D-glucosamine 1-phosphate + UTP + H(+) = UDP-N-acetyl-alpha-D-glucosamine + diphosphate. The protein operates within nucleotide-sugar biosynthesis; UDP-N-acetyl-alpha-D-glucosamine biosynthesis; N-acetyl-alpha-D-glucosamine 1-phosphate from alpha-D-glucosamine 6-phosphate (route II): step 2/2. It participates in nucleotide-sugar biosynthesis; UDP-N-acetyl-alpha-D-glucosamine biosynthesis; UDP-N-acetyl-alpha-D-glucosamine from N-acetyl-alpha-D-glucosamine 1-phosphate: step 1/1. It functions in the pathway bacterial outer membrane biogenesis; LPS lipid A biosynthesis. Its function is as follows. Catalyzes the last two sequential reactions in the de novo biosynthetic pathway for UDP-N-acetylglucosamine (UDP-GlcNAc). The C-terminal domain catalyzes the transfer of acetyl group from acetyl coenzyme A to glucosamine-1-phosphate (GlcN-1-P) to produce N-acetylglucosamine-1-phosphate (GlcNAc-1-P), which is converted into UDP-GlcNAc by the transfer of uridine 5-monophosphate (from uridine 5-triphosphate), a reaction catalyzed by the N-terminal domain. The polypeptide is Bifunctional protein GlmU (Acinetobacter baylyi (strain ATCC 33305 / BD413 / ADP1)).